A 598-amino-acid chain; its full sequence is EF-hand and coiled-coil domain-containing protein 1 (598 aa).

A disordered region spans residues 1 to 22 (MEPVSTGAEAGMEGAGGDPYRR). Residues 54-89 (GLDQYLQEVFHHLDCRGAGRLPRADFRALCAVLGLR) enclose the EF-hand domain. Disordered regions lie at residues 96–127 (AGQA…DTDE), 175–198 (RLRR…PDCE), and 326–411 (YRSE…KKTP). The segment covering 175-185 (RLRRPRRRRRP) has biased composition (basic residues). Positions 196 to 303 (DCERVARLEE…RSLHRVRELE (108 aa)) form a coiled coil. The span at 343-359 (PGDKSNEPEDAGTRDPD) shows a compositional bias: basic and acidic residues. Residues 394–404 (SDEEEVEEERW) are compositionally biased toward acidic residues. The stretch at 479-533 (TSEEEAELQQKVEENEHLRLELQMVETERVRLSLLEEKLVDVLQLLQRLRDLNIS) forms a coiled coil.

The chain is EF-hand and coiled-coil domain-containing protein 1 (EFCC1) from Homo sapiens (Human).